A 344-amino-acid chain; its full sequence is GTP 3',8-cyclase (344 aa).

The 227-residue stretch at P19 to A245 folds into the Radical SAM core domain. GTP is bound at residue R28. Positions 35 and 39 each coordinate [4Fe-4S] cluster. Y41 lines the S-adenosyl-L-methionine pocket. C42 serves as a coordination point for [4Fe-4S] cluster. R77 is a binding site for GTP. S-adenosyl-L-methionine is bound at residue G81. T111 is a GTP binding site. Residue S135 coordinates S-adenosyl-L-methionine. K171 is a binding site for GTP. M205 serves as a coordination point for S-adenosyl-L-methionine. Positions 268 and 271 each coordinate [4Fe-4S] cluster. R273–R275 contributes to the GTP binding site. Residue C285 coordinates [4Fe-4S] cluster.

The protein belongs to the radical SAM superfamily. MoaA family. In terms of assembly, monomer and homodimer. [4Fe-4S] cluster is required as a cofactor.

It carries out the reaction GTP + AH2 + S-adenosyl-L-methionine = (8S)-3',8-cyclo-7,8-dihydroguanosine 5'-triphosphate + 5'-deoxyadenosine + L-methionine + A + H(+). It participates in cofactor biosynthesis; molybdopterin biosynthesis. Functionally, catalyzes the cyclization of GTP to (8S)-3',8-cyclo-7,8-dihydroguanosine 5'-triphosphate. The chain is GTP 3',8-cyclase from Brucella melitensis biotype 2 (strain ATCC 23457).